A 465-amino-acid chain; its full sequence is UDP-N-acetylmuramate--L-alanine ligase (465 aa).

112–118 (GTHGKTT) serves as a coordination point for ATP.

The protein belongs to the MurCDEF family.

Its subcellular location is the cytoplasm. It catalyses the reaction UDP-N-acetyl-alpha-D-muramate + L-alanine + ATP = UDP-N-acetyl-alpha-D-muramoyl-L-alanine + ADP + phosphate + H(+). It participates in cell wall biogenesis; peptidoglycan biosynthesis. Cell wall formation. This is UDP-N-acetylmuramate--L-alanine ligase from Burkholderia cenocepacia (strain ATCC BAA-245 / DSM 16553 / LMG 16656 / NCTC 13227 / J2315 / CF5610) (Burkholderia cepacia (strain J2315)).